A 210-amino-acid chain; its full sequence is Cell division protein SepF (210 aa).

2 stretches are compositionally biased toward low complexity: residues 36–47 (QQQQTPAAVPTQ) and 59–69 (RASATTATTAS). Disordered regions lie at residues 36 to 69 (QQQQ…TTAS) and 182 to 210 (NEMS…QMIQ).

This sequence belongs to the SepF family. As to quaternary structure, homodimer. Interacts with FtsZ.

The protein localises to the cytoplasm. Functionally, cell division protein that is part of the divisome complex and is recruited early to the Z-ring. Probably stimulates Z-ring formation, perhaps through the cross-linking of FtsZ protofilaments. Its function overlaps with FtsA. The chain is Cell division protein SepF from Trichodesmium erythraeum (strain IMS101).